The sequence spans 296 residues: Acetylglutamate kinase (296 aa).

Substrate is bound by residues 69–70 (GG), Arg91, and Asn192.

It belongs to the acetylglutamate kinase family. ArgB subfamily.

The protein resides in the cytoplasm. It catalyses the reaction N-acetyl-L-glutamate + ATP = N-acetyl-L-glutamyl 5-phosphate + ADP. It participates in amino-acid biosynthesis; L-arginine biosynthesis; N(2)-acetyl-L-ornithine from L-glutamate: step 2/4. Functionally, catalyzes the ATP-dependent phosphorylation of N-acetyl-L-glutamate. This Ruthia magnifica subsp. Calyptogena magnifica protein is Acetylglutamate kinase.